A 44-amino-acid chain; its full sequence is MTTKKSAEVLVYPIFTVRWLAIHGIAVPTIFFLGAITAMQFIQR.

A helical transmembrane segment spans residues 19–35; sequence WLAIHGIAVPTIFFLGA. Histidine 23 is a heme binding site.

It belongs to the PsbE/PsbF family. Heterodimer of an alpha subunit and a beta subunit. PSII is composed of 1 copy each of membrane proteins PsbA, PsbB, PsbC, PsbD, PsbE, PsbF, PsbH, PsbI, PsbJ, PsbK, PsbL, PsbM, PsbT, PsbX, PsbY, PsbZ, Psb30/Ycf12, at least 3 peripheral proteins of the oxygen-evolving complex and a large number of cofactors. It forms dimeric complexes. Heme b serves as cofactor.

Its subcellular location is the plastid. The protein resides in the chloroplast thylakoid membrane. In terms of biological role, this b-type cytochrome is tightly associated with the reaction center of photosystem II (PSII). PSII is a light-driven water:plastoquinone oxidoreductase that uses light energy to abstract electrons from H(2)O, generating O(2) and a proton gradient subsequently used for ATP formation. It consists of a core antenna complex that captures photons, and an electron transfer chain that converts photonic excitation into a charge separation. This is Cytochrome b559 subunit beta from Chlamydomonas reinhardtii (Chlamydomonas smithii).